A 237-amino-acid chain; its full sequence is Purine nucleoside phosphorylase DeoD-type (237 aa).

Residue His-4 coordinates a purine D-ribonucleoside. Phosphate-binding positions include Gly-20, Arg-24, Arg-43, and 87-90; that span reads RVGT. A purine D-ribonucleoside-binding positions include 179–181 and 203–204; these read EME and SD. Asp-204 serves as the catalytic Proton donor.

It belongs to the PNP/UDP phosphorylase family. Homohexamer; trimer of homodimers.

It catalyses the reaction a purine D-ribonucleoside + phosphate = a purine nucleobase + alpha-D-ribose 1-phosphate. The catalysed reaction is a purine 2'-deoxy-D-ribonucleoside + phosphate = a purine nucleobase + 2-deoxy-alpha-D-ribose 1-phosphate. In terms of biological role, catalyzes the reversible phosphorolytic breakdown of the N-glycosidic bond in the beta-(deoxy)ribonucleoside molecules, with the formation of the corresponding free purine bases and pentose-1-phosphate. The protein is Purine nucleoside phosphorylase DeoD-type of Exiguobacterium sp. (strain ATCC BAA-1283 / AT1b).